Here is a 1355-residue protein sequence, read N- to C-terminus: Patatin-like phospholipase domain-containing protein 6 (1355 aa).

Residues 1-43 lie on the Lumenal side of the membrane; it reads MGTPSHELNTTSSGAEVIQKTLEEGLGRRICVAQPVPFVPQVL. A glycan (N-linked (GlcNAc...) asparagine) is linked at asparagine 9. Residues 44–64 traverse the membrane as a helical segment; that stretch reads GVMIGAGVAVLVTAVLILLVV. The Cytoplasmic segment spans residues 65–1355; the sequence is RRLRVQKTPA…QETPSSVADA (1291 aa). 179-306 contributes to the a nucleoside 3',5'-cyclic phosphate binding site; that stretch reads VLGHFEKPLF…VRVVQIIMVR (128 aa). Phosphoserine is present on serine 338. The tract at residues 338 to 395 is disordered; it reads SPGLPTRTSPVRGSKRVVSTSGTEDTSKETSGRPLDSIGAPLPGPAGDPVKPTSLEAP. Positions 343–361 are enriched in polar residues; that stretch reads TRTSPVRGSKRVVSTSGTE. A Phosphothreonine modification is found at threonine 345. A phosphoserine mark is found at serine 346, serine 356, and serine 405. Residues 492 to 614 and 610 to 730 each bind a nucleoside 3',5'-cyclic phosphate; these read ELAK…VAAR and TVAA…LSQK. Residues 961–1127 enclose the PNPLA domain; sequence LVLGGGGARG…INNLPADIAR (167 aa). Positions 965–970 match the GXGXXG motif; it reads GGGARG. The GXSXG signature appears at 992-996; sequence GTSIG. Residue serine 994 is the Nucleophile of the active site. Aspartate 1114 functions as the Proton acceptor in the catalytic mechanism. The DGA/G signature appears at 1114–1116; sequence DGG. Positions 1286-1355 are disordered; sequence SYVSDGCADG…QETPSSVADA (70 aa). Acidic residues predominate over residues 1293–1309; the sequence is ADGEESDCLTEYEEDAG.

It belongs to the NTE family. Glycosylated. Expressed in brain, testes and kidney (at protein level). Expressed ubiquitously in brain of young mice. Reaching adulthood, there is a most prominent expression in Purkinje cells, granule cells and pyramidal neurons of the hippocampus and some large neurons in the medulla oblongata, nucleus dentatus and pons.

Its subcellular location is the endoplasmic reticulum membrane. The enzyme catalyses a 1-acyl-sn-glycero-3-phosphocholine + H2O = sn-glycerol 3-phosphocholine + a fatty acid + H(+). It carries out the reaction 1-hexadecanoyl-sn-glycero-3-phosphocholine + H2O = sn-glycerol 3-phosphocholine + hexadecanoate + H(+). It catalyses the reaction 1-hexadecanoyl-sn-glycero-3-phosphate + H2O = sn-glycerol 3-phosphate + hexadecanoate + H(+). The catalysed reaction is 1-(9Z-octadecenoyl)-sn-glycero-3-phosphocholine + H2O = sn-glycerol 3-phosphocholine + (9Z)-octadecenoate + H(+). The enzyme catalyses 1-hexadecanoylglycerol + H2O = glycerol + hexadecanoate + H(+). It carries out the reaction 2-hexadecanoylglycerol + H2O = glycerol + hexadecanoate + H(+). It catalyses the reaction 1-(9Z-octadecenoyl)-glycerol + H2O = glycerol + (9Z)-octadecenoate + H(+). The catalysed reaction is 2-(9Z-octadecenoyl)-glycerol + H2O = glycerol + (9Z)-octadecenoate + H(+). The enzyme catalyses 2-(5Z,8Z,11Z,14Z-eicosatetraenoyl)-glycerol + H2O = glycerol + (5Z,8Z,11Z,14Z)-eicosatetraenoate + H(+). Inhibited by a series a OPs such as mipafox (MPX), phenyl saligenin phosphate (PSP), phenyl dipentyl phosphinate (PDPP), diisopropyl fluorophosphate and paraoxon. Phospholipase B that deacylates intracellular phosphatidylcholine (PtdCho), generating glycerophosphocholine (GroPtdCho). This deacylation occurs at both sn-2 and sn-1 positions of PtdCho. Catalyzes the hydrolysis of several naturally occurring membrane-associated lipids. Hydrolyzes lysophospholipids and monoacylglycerols, preferring the 1-acyl to the 2-acyl isomer. Does not catalyze hydrolysis of di- or triacylglycerols or fatty acid amides. The chain is Patatin-like phospholipase domain-containing protein 6 (Pnpla6) from Mus musculus (Mouse).